A 33-amino-acid chain; its full sequence is Pardaxin P-2 (33 aa).

Belongs to the pardaxin family. In aqueous solution exists as a tetramer.

The protein resides in the secreted. It localises to the target cell membrane. Exhibits unusual shark repellent and surfactant properties. Forms voltage-dependent, ion-permeable channels in membranes. At high concentration causes cell membrane lysis. The chain is Pardaxin P-2 from Pardachirus pavoninus (Peacock sole).